Reading from the N-terminus, the 343-residue chain is Mating-type protein MAT-2 (343 aa).

Disordered regions lie at residues 98-117 (RSPQVVSSPQSAQTSPSEQT) and 177-223 (KKPW…AAMT). The span at 99-117 (SPQVVSSPQSAQTSPSEQT) shows a compositional bias: low complexity. The HMG box DNA-binding region spans 131-199 (APRPMNCWII…EHLRQHPNYK (69 aa)). Over residues 206-218 (GEKKKRQSRKSKR) the composition is skewed to basic residues.

Its subcellular location is the nucleus. This chain is Mating-type protein MAT-2 (MAT2), found in Cochliobolus heterostrophus (Southern corn leaf blight fungus).